Here is a 478-residue protein sequence, read N- to C-terminus: Major facilitator superfamily domain-containing protein 12 (478 aa).

Residue M1 is modified to N-acetylmethionine. The Cytoplasmic segment spans residues M1–A26. The chain crosses the membrane as a helical span at residues V27–L47. Topologically, residues H48–R56 are lumenal. The helical transmembrane segment at G57–G77 threads the bilayer. Residues Y78 to H97 lie on the Cytoplasmic side of the membrane. The helical transmembrane segment at L98 to C118 threads the bilayer. The Lumenal segment spans residues G119–E124. The chain crosses the membrane as a helical span at residues W125–T145. At Q146–A168 the chain is on the cytoplasmic side. The chain crosses the membrane as a helical span at residues L169 to L189. Over R190–R216 the chain is Lumenal. The chain crosses the membrane as a helical span at residues T217–T237. Residues R238–Q277 lie on the Cytoplasmic side of the membrane. A helical membrane pass occupies residues V278–L300. Residues T301–K308 are Lumenal-facing. Residues K309 to M329 form a helical membrane-spanning segment. The Cytoplasmic portion of the chain corresponds to K330–R338. The helical transmembrane segment at N339 to V359 threads the bilayer. The Lumenal segment spans residues D360–E361. The chain crosses the membrane as a helical span at residues L362 to V382. At T383–A400 the chain is on the cytoplasmic side. The chain crosses the membrane as a helical span at residues F401 to I421. The Lumenal portion of the chain corresponds to Q422–C436. The chain crosses the membrane as a helical span at residues V437–L457. The Cytoplasmic segment spans residues S458 to P478.

It belongs to the major facilitator superfamily.

The protein localises to the melanosome membrane. It is found in the lysosome membrane. It catalyses the reaction L-cysteine(in) = L-cysteine(out). Transporter that mediates the import of cysteine into melanosomes, thereby regulating skin/hair pigmentation. In melanosomes, cysteine import is required both for normal levels of cystine, the oxidized dimer of cysteine, and provide cysteine for the production of the cysteinyldopas used in pheomelanin synthesis, thereby regulating skin/hair pigmentation. Also catalyzes import of cysteine into lysosomes in non-pigmented cells, regulating lysosomal cystine and cysteine storage, which is essnetial for redox homeostasis. This Equus caballus (Horse) protein is Major facilitator superfamily domain-containing protein 12.